The primary structure comprises 173 residues: Putative metal-dependent hydrolase BC_2708 (173 aa).

Positions 65, 156, and 160 each coordinate Zn(2+).

It belongs to the metal hydrolase YfiT family. As to quaternary structure, homodimer. Requires Zn(2+) as cofactor.

The protein resides in the cytoplasm. Functionally, possible metal-dependent hydrolase. This chain is Putative metal-dependent hydrolase BC_2708, found in Bacillus cereus (strain ATCC 14579 / DSM 31 / CCUG 7414 / JCM 2152 / NBRC 15305 / NCIMB 9373 / NCTC 2599 / NRRL B-3711).